Here is a 534-residue protein sequence, read N- to C-terminus: MIWVVLMMAILLPQSLAHPGFFTSIGQMTDLIHNEKDLVTSLKDYIKAEEDKLEQIKKWAEKLDRLTSTATKDPEGFVGHPVNAFKLMKRLNTEWSELENLILKDMSDGFISNLTIQRQYFPNDEDQVGAAKALFRLQDTYNLDTNTISKGNLPGVQHKSFLTAEDCFELGKVAYTEADYYHTELWMEQALTQLEEGELSTVDKVSVLDYLSYAVYQQGDLDKALLLTKKLLELDPEHQRANGNLVYFEYIMSKEKDANKSASGDQSDQKTAPKKKGIAVDYLPERQKYEMLCRGEGIKMTPRRQKRLFCRYHDGNRNPKFILAPAKQEDEWDKPRIIRFHDIISDAEIEIVKDLAKPRLRRATISNPVTGALETVHYRISKSAWLSGYEDPVVSRINMRIQDLTGLDVSTAEELQVANYGVGGQYEPHFDFARKDEPDAFRELGTGNRIATWLFYMSDVSAGGATVFPEVGASVWPKKGTAVFWYNLFASGEGDYSTRHAACPVLVGNKWVSNKWLHERGQEFRRPCTLSELE.

The N-terminal stretch at 1–17 is a signal peptide; that stretch reads MIWVVLMMAILLPQSLA. An N-linked (GlcNAc...) asparagine glycan is attached at Asn113. Residues 205 to 238 form a TPR repeat; the sequence is VSVLDYLSYAVYQQGDLDKALLLTKKLLELDPEH. The N-linked (GlcNAc...) asparagine glycan is linked to Asn259. The Fe2OG dioxygenase domain occupies 411 to 519; that stretch reads TAEELQVANY…KWVSNKWLHE (109 aa). Fe cation-binding residues include His429, Asp431, and His500. Residue Lys510 coordinates 2-oxoglutarate.

The protein belongs to the P4HA family. In terms of assembly, heterotetramer of two alpha-1 chains and two beta chains (P4HB)(the beta chain is the multi-functional PDI), where P4HB plays the role of a structural subunit; this tetramer catalyzes the formation of 4-hydroxyproline in collagen. Fe(2+) serves as cofactor. Requires L-ascorbate as cofactor. As to expression, expressed at least in brain, heart and lung.

It localises to the endoplasmic reticulum lumen. The enzyme catalyses L-prolyl-[collagen] + 2-oxoglutarate + O2 = trans-4-hydroxy-L-prolyl-[collagen] + succinate + CO2. With respect to regulation, inhibited by poly(L-proline). In terms of biological role, catalyzes the post-translational formation of 4-hydroxyproline in -Xaa-Pro-Gly- sequences in collagens and other proteins. The protein is Prolyl 4-hydroxylase subunit alpha-1 (P4ha1) of Mus musculus (Mouse).